Here is a 506-residue protein sequence, read N- to C-terminus: Gamma-aminobutyric acid receptor subunit epsilon (506 aa).

Positions 1-17 are cleaved as a signal peptide; that stretch reads MLPKVLLMLLNMFLALQ. Topologically, residues 18–277 are extracellular; the sequence is WRVGPHIKLE…MTFFFNVSRR (260 aa). The disordered stretch occupies residues 32–65; it reads AQDKVVFGPQPQPSGKKLPARETELTADHTTERP. A compositionally biased stretch (basic and acidic residues) spans 50 to 65; sequence PARETELTADHTTERP. The N-linked (GlcNAc...) asparagine glycan is linked to asparagine 135. Cysteine 196 and cysteine 210 are joined by a disulfide. N-linked (GlcNAc...) asparagine glycosylation is present at asparagine 253. A helical transmembrane segment spans residues 278–298; the sequence is FGFIVFQNYIPSSVTTMLSWV. Over 299–308 the chain is Cytoplasmic; it reads SFWIKIEAAA. Residues 309 to 328 traverse the membrane as a helical segment; it reads ARASVGVSSVLTMATLGTFS. At 329–344 the chain is on the extracellular side; sequence RKNFPRVSYLTALDFY. Residues 345 to 365 traverse the membrane as a helical segment; that stretch reads IAICFVLCFCTLLEFTVLNFL. At 366 to 485 the chain is on the cytoplasmic side; it reads TYNNIERQAS…HVYRLDNYSR (120 aa). A helical membrane pass occupies residues 486–506; that stretch reads VLFPITFFFFNVVYWVICLNL.

It belongs to the ligand-gated ion channel (TC 1.A.9) family. Gamma-aminobutyric acid receptor (TC 1.A.9.5) subfamily. GABRE sub-subfamily. In terms of assembly, heteropentamer, formed by a combination of alpha (GABRA1-6), beta (GABRB1-3), gamma (GABRG1-3), delta (GABRD), epsilon (GABRE), rho (GABRR1-3), pi (GABRP) and theta (GABRQ) chains, each subunit exhibiting distinct physiological and pharmacological properties. Expressed in brain and heart. Strongly expressed in locus ceruleus from the first postnatal day. Weakly expressed in other brainstem nuclei and in the hypothalamus. Found in the cerebral cortex of pups.

The protein resides in the cell membrane. The protein localises to the postsynaptic cell membrane. The enzyme catalyses chloride(in) = chloride(out). Functionally, epsilon subunit of the heteropentameric ligand-gated chloride channel gated by gamma-aminobutyric acid (GABA), a major inhibitory neurotransmitter in the brain. GABA-gated chloride channels, also named GABA(A) receptors (GABAAR), consist of five subunits arranged around a central pore and contain GABA active binding site(s) located at the alpha and beta subunit interfaces. When activated by GABA, GABAARs selectively allow the flow of chloride anions across the cell membrane down their electrochemical gradient. GABARs containing epsilon subunit may also permit spontaneous chloride channel activity while preserving the structural information required for GABA-gated openings. GABARs containing epsilon subunit may regulate cardiac function. In Rattus norvegicus (Rat), this protein is Gamma-aminobutyric acid receptor subunit epsilon.